A 342-amino-acid chain; its full sequence is Heat-inducible transcription repressor HrcA (342 aa).

It belongs to the HrcA family.

Negative regulator of class I heat shock genes (grpE-dnaK-dnaJ and groELS operons). Prevents heat-shock induction of these operons. This is Heat-inducible transcription repressor HrcA from Methylibium petroleiphilum (strain ATCC BAA-1232 / LMG 22953 / PM1).